A 198-amino-acid chain; its full sequence is uncharacterized protein (198 aa).

This is an uncharacterized protein from Caenorhabditis elegans.